A 414-amino-acid polypeptide reads, in one-letter code: Arrestin domain-containing protein 3 (414 aa).

2 short sequence motifs (PPxY motif) span residues 346–349 and 391–394; these read PPSY and PPLY. Residues 393–414 form a disordered region; it reads LYSEIDPNPDQPADDRPSCPSR. The segment covering 405 to 414 has biased composition (basic and acidic residues); that stretch reads ADDRPSCPSR.

Belongs to the arrestin family. As to quaternary structure, interacts (via PPxY motifs) with NEDD4 (via WW domains). Interacts with ADRB2. Interacts with ADRB3. Interacts with HGS (via PPxY motifs). Does not bind TXN (thioredoxin). Interacts with ITCH.

The protein localises to the cytoplasm. The protein resides in the cell membrane. Its subcellular location is the lysosome. It localises to the endosome. It is found in the early endosome. Its function is as follows. Adapter protein that plays a role in regulating cell-surface expression of adrenergic receptors and probably also other G protein-coupled receptors. Plays a role in NEDD4-mediated ubiquitination and endocytosis af activated ADRB2 and subsequent ADRB2 degradation. May recruit NEDD4 to ADRB2. Alternatively, may function as adapter protein that does not play a major role in recruiting NEDD4 to ADRB2, but rather plays a role in a targeting ADRB2 to endosomes. The polypeptide is Arrestin domain-containing protein 3 (ARRDC3) (Bos taurus (Bovine)).